Consider the following 284-residue polypeptide: Cell division protein FtsQ (284 aa).

Basic residues predominate over residues 1–10 (MAFGKSKNRR). Residues 1–23 (MAFGKSKNRRRQDAAQQKEAVRG) are disordered. The Cytoplasmic portion of the chain corresponds to 1 to 34 (MAFGKSKNRRRQDAAQQKEAVRGAVRSQGPRALK). A helical transmembrane segment spans residues 35 to 52 (VLGLTLGTGLLVWGGAAL). Residues 53–284 (REWTLTSPRF…ASERSGASMR (232 aa)) are Periplasmic-facing. The POTRA domain occupies 62–130 (FELEAVSFSG…NRVSVEVTEH (69 aa)).

It belongs to the FtsQ/DivIB family. FtsQ subfamily.

The protein localises to the cell inner membrane. Its function is as follows. Essential cell division protein. The chain is Cell division protein FtsQ from Myxococcus fulvus (strain ATCC BAA-855 / HW-1).